The sequence spans 599 residues: Elongation factor 4 (599 aa).

The tr-type G domain occupies 5–187 (SHIRNFSIIA…ALVNGIPAPV (183 aa)). GTP-binding positions include 17–22 (DHGKST) and 134–137 (NKMD).

The protein belongs to the TRAFAC class translation factor GTPase superfamily. Classic translation factor GTPase family. LepA subfamily.

It localises to the cell inner membrane. It carries out the reaction GTP + H2O = GDP + phosphate + H(+). In terms of biological role, required for accurate and efficient protein synthesis under certain stress conditions. May act as a fidelity factor of the translation reaction, by catalyzing a one-codon backward translocation of tRNAs on improperly translocated ribosomes. Back-translocation proceeds from a post-translocation (POST) complex to a pre-translocation (PRE) complex, thus giving elongation factor G a second chance to translocate the tRNAs correctly. Binds to ribosomes in a GTP-dependent manner. This is Elongation factor 4 from Teredinibacter turnerae (strain ATCC 39867 / T7901).